A 199-amino-acid chain; its full sequence is Peroxiredoxin-1 (199 aa).

Residue Ser2 is modified to N-acetylserine. The Thioredoxin domain maps to 6-165 (AKIGYPAPNF…IIRLVQAFQF (160 aa)). Lys7 is modified (N6-acetyllysine; alternate). Lys7 is covalently cross-linked (Glycyl lysine isopeptide (Lys-Gly) (interchain with G-Cter in SUMO2); alternate). Residues Lys16 and Lys27 each carry the N6-acetyllysine modification. Ser32 carries the post-translational modification Phosphoserine. Lys35 is modified (N6-acetyllysine; alternate). Position 35 is an N6-succinyllysine; alternate (Lys35). The Cysteine sulfenic acid (-SOH) intermediate role is filled by Cys52. Thr90 carries the phosphothreonine modification. Lys120 is covalently cross-linked (Glycyl lysine isopeptide (Lys-Gly) (interchain with G-Cter in SUMO2)). The residue at position 136 (Lys136) is an N6-acetyllysine. A Glycyl lysine isopeptide (Lys-Gly) (interchain with G-Cter in SUMO1) cross-link involves residue Lys185. At Lys197 the chain carries N6-acetyllysine.

Belongs to the peroxiredoxin family. AhpC/Prx1 subfamily. Homodimer; disulfide-linked, upon oxidation. 5 homodimers assemble to form a ring-like decamer. Interacts with GDPD5; forms a mixed-disulfide with GDPD5. Interacts with SESN1 and SESN2. Interacts with FAM107A. Phosphorylated on Thr-90 during the M-phase, which leads to a decrease in enzymatic activity. In terms of processing, acetylation increases reducing activity and resistance to superoxidation. Deacetylated by HDAC6 which decreases reducing activity. In terms of tissue distribution, found in various tissues; high concentration in liver.

The protein localises to the cytoplasm. It carries out the reaction a hydroperoxide + [thioredoxin]-dithiol = an alcohol + [thioredoxin]-disulfide + H2O. In terms of biological role, thiol-specific peroxidase that catalyzes the reduction of hydrogen peroxide and organic hydroperoxides to water and alcohols, respectively. Plays a role in cell protection against oxidative stress by detoxifying peroxides and as sensor of hydrogen peroxide-mediated signaling events. Might participate in the signaling cascades of growth factors and tumor necrosis factor-alpha by regulating the intracellular concentrations of H(2)O(2). Reduces an intramolecular disulfide bond in GDPD5 that gates the ability to GDPD5 to drive postmitotic motor neuron differentiation. The chain is Peroxiredoxin-1 (Prdx1) from Mus musculus (Mouse).